The following is a 232-amino-acid chain: UPF0758 protein EF_2926 (232 aa).

In terms of domain architecture, MPN spans 107 to 229; the sequence is KVTSSQQVAQ…YISLREENFF (123 aa). Zn(2+) is bound by residues His178, His180, and Asp191. The JAMM motif signature appears at 178–191; it reads HNHPSGNPTPSPQD.

It belongs to the UPF0758 family.

This chain is UPF0758 protein EF_2926, found in Enterococcus faecalis (strain ATCC 700802 / V583).